The chain runs to 341 residues: Trace amine-associated receptor 13c (341 aa).

Over 1–34 (MDLSSQEYDPSQFCFPAVNNSCLKGTHHVSTQTV) the chain is Extracellular. The N-linked (GlcNAc...) asparagine glycan is linked to asparagine 19. Disulfide bonds link cysteine 22-cysteine 186 and cysteine 105-cysteine 186. A helical membrane pass occupies residues 35–55 (VYLILASAMTVTVLGNSVVII). Over 56-68 (SIAHFKQLQTPTN) the chain is Cytoplasmic. Residues 69–89 (ILVMSLALADLLLGLVVMPFS) form a helical membrane-spanning segment. Over 90–105 (MIRSVDGCWYYGETFC) the chain is Extracellular. The helical transmembrane segment at 106 to 126 (LLHTGFDLFLTSVSIFHLIFI) threads the bilayer. Residues 127 to 147 (AVDRHQAVCFPLQYPTRITIP) are Cytoplasmic-facing. A helical membrane pass occupies residues 148-168 (VAWVMVMISWSMAAFYSYGVV). The Extracellular segment spans residues 169-195 (YSKANLEGLEEYIASVYCMGGCTLYFN). The helical transmembrane segment at 196-219 (ALWSVLDTLLTFFLPCSVMVGLYA) threads the bilayer. The Cytoplasmic segment spans residues 220 to 257 (RIFVVAKKHIKSITEANQNENENVFKNPRRSERKAAKT). A helical membrane pass occupies residues 258 to 278 (LGIVVGAFILCWLPFFINSLV). The Extracellular segment spans residues 279 to 292 (DPYINFSTPYALFD). Asparagine 283 carries N-linked (GlcNAc...) asparagine glycosylation. Residues 293–313 (AFGWLGYTNSTLNPIIYGLFY) form a helical membrane-spanning segment. Residues 314–341 (PWFRKTLSLIVTLRIFEPNSSDINLFTV) lie on the Cytoplasmic side of the membrane.

The protein belongs to the G-protein coupled receptor 1 family. As to expression, expressed in olfactory epithelium (at protein level). Detected in a sparse population of olfactory sensory neurons.

Its subcellular location is the cell membrane. In terms of biological role, olfactory receptor for medium length odd-chained diamines including cadaverine which is generated by bacterial decarboxylation of the basic amino acid lysine and contributes to the odor of decomposing tissue. Mediates pronounced innate aversion behavior to cadaverine. The chain is Trace amine-associated receptor 13c from Danio rerio (Zebrafish).